The primary structure comprises 161 residues: Protein UXT homolog (161 aa).

The protein belongs to the UXT family.

The sequence is that of Protein UXT homolog from Dictyostelium discoideum (Social amoeba).